The chain runs to 37 residues: Ferredoxin--NADP reductase, chloroplastic (37 aa).

NADP(+) contacts are provided by residues Ser-3 and 24-25 (SR).

This sequence belongs to the ferredoxin--NADP reductase type 1 family. FAD is required as a cofactor.

It is found in the plastid. Its subcellular location is the chloroplast stroma. The protein localises to the chloroplast thylakoid membrane. The enzyme catalyses 2 reduced [2Fe-2S]-[ferredoxin] + NADP(+) + H(+) = 2 oxidized [2Fe-2S]-[ferredoxin] + NADPH. Its pathway is energy metabolism; photosynthesis. Functionally, may play a key role in regulating the relative amounts of cyclic and non-cyclic electron flow to meet the demands of the plant for ATP and reducing power. The chain is Ferredoxin--NADP reductase, chloroplastic from Imperata cylindrica (Cogon grass).